A 222-amino-acid chain; its full sequence is UPF0128 protein PF1488 (222 aa).

Belongs to the UPF0128 family.

The protein is UPF0128 protein PF1488 of Pyrococcus furiosus (strain ATCC 43587 / DSM 3638 / JCM 8422 / Vc1).